The following is a 90-amino-acid chain: Small ribosomal subunit protein bS16 (90 aa).

It belongs to the bacterial ribosomal protein bS16 family.

This chain is Small ribosomal subunit protein bS16, found in Lactococcus lactis subsp. cremoris (strain SK11).